The sequence spans 1071 residues: DNA-directed RNA polymerase subunit beta (1071 aa).

It belongs to the RNA polymerase beta chain family. In terms of assembly, in plastids the minimal PEP RNA polymerase catalytic core is composed of four subunits: alpha, beta, beta', and beta''. When a (nuclear-encoded) sigma factor is associated with the core the holoenzyme is formed, which can initiate transcription.

The protein localises to the plastid. Its subcellular location is the chloroplast. The enzyme catalyses RNA(n) + a ribonucleoside 5'-triphosphate = RNA(n+1) + diphosphate. Functionally, DNA-dependent RNA polymerase catalyzes the transcription of DNA into RNA using the four ribonucleoside triphosphates as substrates. This is DNA-directed RNA polymerase subunit beta from Acorus calamus (Sweet flag).